The following is a 253-amino-acid chain: 3-deoxy-manno-octulosonate cytidylyltransferase (253 aa).

It belongs to the KdsB family.

The protein localises to the cytoplasm. The enzyme catalyses 3-deoxy-alpha-D-manno-oct-2-ulosonate + CTP = CMP-3-deoxy-beta-D-manno-octulosonate + diphosphate. It participates in nucleotide-sugar biosynthesis; CMP-3-deoxy-D-manno-octulosonate biosynthesis; CMP-3-deoxy-D-manno-octulosonate from 3-deoxy-D-manno-octulosonate and CTP: step 1/1. It functions in the pathway bacterial outer membrane biogenesis; lipopolysaccharide biosynthesis. In terms of biological role, activates KDO (a required 8-carbon sugar) for incorporation into bacterial lipopolysaccharide in Gram-negative bacteria. The chain is 3-deoxy-manno-octulosonate cytidylyltransferase from Proteus mirabilis (strain HI4320).